The primary structure comprises 282 residues: MATVTAALVKELRERTAAGMMECKKALVEAEGDIELAIENMRKSGAAKAAKKAGNIAAEGTIIIKEEAGVAVLLEVNCQTDFVAKDSGFLGFANEVAEVALAERLNDIVALQAKFEDARIALVTKIGENISIRRVQLVEGVALASYRHGEKIGVVIAGEGDAETLKHIAMHVAASKPEYVNPSDVPADVVEKEKAVQVEIAMNEGKPQEIAEKMVIGRMKKFTGEVSLTGQAFIMEPKKTVADILKEKGASVSNFVRLEVGEGIEKAAEMSFADEVAAVQKG.

Residues 80–83 (TDFV) form an involved in Mg(2+) ion dislocation from EF-Tu region.

Belongs to the EF-Ts family.

It localises to the cytoplasm. Associates with the EF-Tu.GDP complex and induces the exchange of GDP to GTP. It remains bound to the aminoacyl-tRNA.EF-Tu.GTP complex up to the GTP hydrolysis stage on the ribosome. This Aliivibrio salmonicida (strain LFI1238) (Vibrio salmonicida (strain LFI1238)) protein is Elongation factor Ts.